The sequence spans 274 residues: NH(3)-dependent NAD(+) synthetase (274 aa).

An ATP-binding site is contributed by 46–53; the sequence is GISGGQDS. Aspartate 52 serves as a coordination point for Mg(2+). A deamido-NAD(+)-binding site is contributed by arginine 140. An ATP-binding site is contributed by threonine 160. Mg(2+) is bound at residue glutamate 165. Deamido-NAD(+) is bound by residues lysine 173 and aspartate 180. The ATP site is built by lysine 189 and threonine 211. 260 to 261 provides a ligand contact to deamido-NAD(+); sequence HK.

It belongs to the NAD synthetase family. As to quaternary structure, homodimer.

It carries out the reaction deamido-NAD(+) + NH4(+) + ATP = AMP + diphosphate + NAD(+) + H(+). It participates in cofactor biosynthesis; NAD(+) biosynthesis; NAD(+) from deamido-NAD(+) (ammonia route): step 1/1. Its function is as follows. Catalyzes the ATP-dependent amidation of deamido-NAD to form NAD. Uses ammonia as a nitrogen source. This Streptococcus pyogenes serotype M2 (strain MGAS10270) protein is NH(3)-dependent NAD(+) synthetase.